Consider the following 422-residue polypeptide: 3-phosphoshikimate 1-carboxyvinyltransferase (422 aa).

3-phosphoshikimate-binding residues include Lys-20, Ser-21, and Arg-25. Lys-20 is a binding site for phosphoenolpyruvate. Phosphoenolpyruvate-binding residues include Gly-90 and Arg-118. Residues Ser-161, Ser-162, Gln-163, Ser-189, Asp-305, and Lys-332 each contribute to the 3-phosphoshikimate site. Residue Gln-163 participates in phosphoenolpyruvate binding. The active-site Proton acceptor is the Asp-305. Positions 336 and 378 each coordinate phosphoenolpyruvate.

It belongs to the EPSP synthase family. As to quaternary structure, monomer.

It is found in the cytoplasm. It carries out the reaction 3-phosphoshikimate + phosphoenolpyruvate = 5-O-(1-carboxyvinyl)-3-phosphoshikimate + phosphate. The protein operates within metabolic intermediate biosynthesis; chorismate biosynthesis. Functionally, catalyzes the transfer of the enolpyruvyl moiety of phosphoenolpyruvate (PEP) to the 5-hydroxyl of shikimate-3-phosphate (S3P) to produce enolpyruvyl shikimate-3-phosphate and inorganic phosphate. The sequence is that of 3-phosphoshikimate 1-carboxyvinyltransferase from Nitrosopumilus maritimus (strain SCM1).